The sequence spans 316 residues: Low affinity immunoglobulin gamma Fc region receptor II-a (316 aa).

An N-terminal signal peptide occupies residues 1 to 35; sequence MAMETQMSQNVCPRNLWLLQPLTVLLLLASADSQA. Topologically, residues 36-216 are extracellular; the sequence is APPKAVLKLE…PSVGSSSPVG (181 aa). Ig-like C2-type domains lie at 38 to 117 and 121 to 203; these read PKAV…VHLT and EWLV…VTIT. 2 disulfide bridges follow: Cys61–Cys103 and Cys142–Cys186. N-linked (GlcNAc...) asparagine glycosylation is found at Asn96, Asn170, and Asn177. Residues 217–239 traverse the membrane as a helical segment; that stretch reads IIVAVVIATAVAAIVAAVVALIY. Over 240–316 the chain is Cytoplasmic; that stretch reads CRKKRISANS…PPNDHVNSNN (77 aa). Phosphotyrosine; by SRC-type Tyr-kinases occurs at positions 287 and 303.

Interacts with INPP5D/SHIP1 and INPPL1/SHIP2, regulating its function. Interacts with APCS and FGR. Interacts with HCK. Post-translationally, phosphorylated by SRC-type Tyr-kinases such as HCK, LYN, BLK, FYN and SYK.

It localises to the cell membrane. Functionally, binds to the Fc region of immunoglobulins gamma. Low affinity receptor. By binding to IgG it initiates cellular responses against pathogens and soluble antigens. Promotes phagocytosis of opsonized antigens. This is Low affinity immunoglobulin gamma Fc region receptor II-a (FCGR2A) from Pan troglodytes (Chimpanzee).